The chain runs to 153 residues: Xanthine-guanine phosphoribosyltransferase (153 aa).

Residues 37 to 38, Arg-69, and 88 to 96 each bind 5-phospho-alpha-D-ribose 1-diphosphate; these read RG and DDLVDTGGT. Position 69 (Arg-69) interacts with GMP. Residue Asp-89 participates in Mg(2+) binding. Guanine is bound by residues Asp-92 and Ile-135. 2 residues coordinate xanthine: Asp-92 and Ile-135. GMP-binding positions include 92–96 and 134–135; these read DTGGT and WI.

It belongs to the purine/pyrimidine phosphoribosyltransferase family. XGPT subfamily. Homotetramer. Requires Mg(2+) as cofactor.

It is found in the cell inner membrane. The enzyme catalyses GMP + diphosphate = guanine + 5-phospho-alpha-D-ribose 1-diphosphate. It carries out the reaction XMP + diphosphate = xanthine + 5-phospho-alpha-D-ribose 1-diphosphate. The catalysed reaction is IMP + diphosphate = hypoxanthine + 5-phospho-alpha-D-ribose 1-diphosphate. It functions in the pathway purine metabolism; GMP biosynthesis via salvage pathway; GMP from guanine: step 1/1. Its pathway is purine metabolism; XMP biosynthesis via salvage pathway; XMP from xanthine: step 1/1. Functionally, purine salvage pathway enzyme that catalyzes the transfer of the ribosyl-5-phosphate group from 5-phospho-alpha-D-ribose 1-diphosphate (PRPP) to the N9 position of the 6-oxopurines guanine and xanthine to form the corresponding ribonucleotides GMP (guanosine 5'-monophosphate) and XMP (xanthosine 5'-monophosphate), with the release of PPi. To a lesser extent, also acts on hypoxanthine. The chain is Xanthine-guanine phosphoribosyltransferase from Photorhabdus laumondii subsp. laumondii (strain DSM 15139 / CIP 105565 / TT01) (Photorhabdus luminescens subsp. laumondii).